Here is a 286-residue protein sequence, read N- to C-terminus: uncharacterized protein (286 aa).

One can recognise an Integrase catalytic domain in the interval 1-146 (MSRYKKDNDG…KPVDVERGDF (146 aa)). The segment covering 252 to 263 (RKVKAKKGKKDK) has biased composition (basic residues). The segment at 252 to 286 (RKVKAKKGKKDKKLKESKKSDDTSTGASTGSSIAM) is disordered. Over residues 264–273 (KLKESKKSDD) the composition is skewed to basic and acidic residues. The segment covering 274–286 (TSTGASTGSSIAM) has biased composition (low complexity).

This is an uncharacterized protein from Caenorhabditis elegans.